The primary structure comprises 235 residues: ATP phosphoribosyltransferase (235 aa).

The protein belongs to the ATP phosphoribosyltransferase family. Short subfamily. In terms of assembly, heteromultimer composed of HisG and HisZ subunits.

It is found in the cytoplasm. The enzyme catalyses 1-(5-phospho-beta-D-ribosyl)-ATP + diphosphate = 5-phospho-alpha-D-ribose 1-diphosphate + ATP. The protein operates within amino-acid biosynthesis; L-histidine biosynthesis; L-histidine from 5-phospho-alpha-D-ribose 1-diphosphate: step 1/9. Its function is as follows. Catalyzes the condensation of ATP and 5-phosphoribose 1-diphosphate to form N'-(5'-phosphoribosyl)-ATP (PR-ATP). Has a crucial role in the pathway because the rate of histidine biosynthesis seems to be controlled primarily by regulation of HisG enzymatic activity. The protein is ATP phosphoribosyltransferase of Synechococcus sp. (strain JA-2-3B'a(2-13)) (Cyanobacteria bacterium Yellowstone B-Prime).